The following is a 297-amino-acid chain: Haloalkane dehalogenase (297 aa).

One can recognise an AB hydrolase-1 domain in the interval 47–148 (PPIVLLHGEP…AIARLVVANG (102 aa)). The active-site Nucleophile is the Asp-123. Residue Asp-250 is the Proton donor of the active site. Catalysis depends on His-279, which acts as the Proton acceptor.

It belongs to the haloalkane dehalogenase family. Type 1 subfamily. In terms of assembly, monomer.

It catalyses the reaction 1-haloalkane + H2O = a halide anion + a primary alcohol + H(+). Catalyzes hydrolytic cleavage of carbon-halogen bonds in halogenated aliphatic compounds, leading to the formation of the corresponding primary alcohols, halide ions and protons. This chain is Haloalkane dehalogenase, found in Mycobacterium marinum (strain ATCC BAA-535 / M).